Reading from the N-terminus, the 142-residue chain is Large ribosomal subunit protein uL13 (142 aa).

It belongs to the universal ribosomal protein uL13 family. Part of the 50S ribosomal subunit.

This protein is one of the early assembly proteins of the 50S ribosomal subunit, although it is not seen to bind rRNA by itself. It is important during the early stages of 50S assembly. The sequence is that of Large ribosomal subunit protein uL13 from Polynucleobacter asymbioticus (strain DSM 18221 / CIP 109841 / QLW-P1DMWA-1) (Polynucleobacter necessarius subsp. asymbioticus).